Consider the following 156-residue polypeptide: Large ribosomal subunit protein uL22 (156 aa).

The protein belongs to the universal ribosomal protein uL22 family. As to quaternary structure, part of the 50S ribosomal subunit.

This protein binds specifically to 23S rRNA. It makes multiple contacts with different domains of the 23S rRNA in the assembled 50S subunit and ribosome. In terms of biological role, the globular domain of the protein is located near the polypeptide exit tunnel on the outside of the subunit, while an extended beta-hairpin is found that lines the wall of the exit tunnel in the center of the 70S ribosome. The chain is Large ribosomal subunit protein uL22 from Hyperthermus butylicus (strain DSM 5456 / JCM 9403 / PLM1-5).